Here is a 406-residue protein sequence, read N- to C-terminus: Cysteine--tRNA ligase (406 aa).

Cys16 is a Zn(2+) binding site. Positions 18 to 28 match the 'HIGH' region motif; that stretch reads PTVYSDVHIGN. Positions 192, 218, and 222 each coordinate Zn(2+). Residues 250 to 254 carry the 'KMSKS' region motif; it reads KMAKS. Position 253 (Lys253) interacts with ATP.

The protein belongs to the class-I aminoacyl-tRNA synthetase family. Monomer. Zn(2+) serves as cofactor.

The protein localises to the cytoplasm. The catalysed reaction is tRNA(Cys) + L-cysteine + ATP = L-cysteinyl-tRNA(Cys) + AMP + diphosphate. The protein is Cysteine--tRNA ligase of Mesomycoplasma hyopneumoniae (strain J / ATCC 25934 / NCTC 10110) (Mycoplasma hyopneumoniae).